The primary structure comprises 305 residues: Glycine--tRNA ligase alpha subunit (305 aa).

It belongs to the class-II aminoacyl-tRNA synthetase family. As to quaternary structure, tetramer of two alpha and two beta subunits.

The protein resides in the cytoplasm. The enzyme catalyses tRNA(Gly) + glycine + ATP = glycyl-tRNA(Gly) + AMP + diphosphate. This Streptococcus pyogenes serotype M49 (strain NZ131) protein is Glycine--tRNA ligase alpha subunit.